Consider the following 693-residue polypeptide: Elongation factor G (693 aa).

The tr-type G domain maps to 8-282 (EKTRNIGIMA…AVIDYLPSPL (275 aa)). Residues 17–24 (AHVDAGKT), 81–85 (DTPGH), and 135–138 (NKMD) contribute to the GTP site.

Belongs to the TRAFAC class translation factor GTPase superfamily. Classic translation factor GTPase family. EF-G/EF-2 subfamily.

The protein resides in the cytoplasm. Functionally, catalyzes the GTP-dependent ribosomal translocation step during translation elongation. During this step, the ribosome changes from the pre-translocational (PRE) to the post-translocational (POST) state as the newly formed A-site-bound peptidyl-tRNA and P-site-bound deacylated tRNA move to the P and E sites, respectively. Catalyzes the coordinated movement of the two tRNA molecules, the mRNA and conformational changes in the ribosome. This chain is Elongation factor G, found in Streptococcus gordonii (strain Challis / ATCC 35105 / BCRC 15272 / CH1 / DL1 / V288).